Here is a 384-residue protein sequence, read N- to C-terminus: S-adenosylmethionine synthase (384 aa).

Histidine 15 contacts ATP. Aspartate 17 contributes to the Mg(2+) binding site. Residue glutamate 43 coordinates K(+). Residues glutamate 56 and glutamine 99 each contribute to the L-methionine site. Residues 99–109 form a flexible loop region; that stretch reads QSPDINQGVDR. ATP is bound by residues 164-166, 230-231, aspartate 239, 245-246, alanine 262, and lysine 266; these read DAK, RF, and RK. Aspartate 239 is an L-methionine binding site. Lysine 270 lines the L-methionine pocket.

It belongs to the AdoMet synthase family. As to quaternary structure, homotetramer; dimer of dimers. The cofactor is Mg(2+). K(+) is required as a cofactor.

Its subcellular location is the cytoplasm. The enzyme catalyses L-methionine + ATP + H2O = S-adenosyl-L-methionine + phosphate + diphosphate. The protein operates within amino-acid biosynthesis; S-adenosyl-L-methionine biosynthesis; S-adenosyl-L-methionine from L-methionine: step 1/1. In terms of biological role, catalyzes the formation of S-adenosylmethionine (AdoMet) from methionine and ATP. The overall synthetic reaction is composed of two sequential steps, AdoMet formation and the subsequent tripolyphosphate hydrolysis which occurs prior to release of AdoMet from the enzyme. This Escherichia fergusonii (strain ATCC 35469 / DSM 13698 / CCUG 18766 / IAM 14443 / JCM 21226 / LMG 7866 / NBRC 102419 / NCTC 12128 / CDC 0568-73) protein is S-adenosylmethionine synthase.